The sequence spans 144 residues: Large ribosomal subunit protein uL15 (144 aa).

Positions 1–50 (MRLNTLSPAAGAKSAKKRVGRGIGSGLGKTGGRGVKGAGSRSGGGVRAGF) are disordered. A compositionally biased stretch (gly residues) spans 21–50 (RGIGSGLGKTGGRGVKGAGSRSGGGVRAGF).

This sequence belongs to the universal ribosomal protein uL15 family. Part of the 50S ribosomal subunit.

In terms of biological role, binds to the 23S rRNA. The polypeptide is Large ribosomal subunit protein uL15 (Tolumonas auensis (strain DSM 9187 / NBRC 110442 / TA 4)).